Consider the following 344-residue polypeptide: Lipase chaperone (344 aa).

A helical membrane pass occupies residues 13-35 (RIAPYGAAGLAAIVGVAIWSGTG).

Belongs to the lipase chaperone family.

Its subcellular location is the cell inner membrane. May be involved in the folding of the extracellular lipase during its passage through the periplasm. The protein is Lipase chaperone of Burkholderia vietnamiensis (strain G4 / LMG 22486) (Burkholderia cepacia (strain R1808)).